The sequence spans 329 residues: COP9 signalosome complex subunit 6 (329 aa).

In terms of domain architecture, MPN spans 44–175; it reads TRVKAQAACS…VTIYESELHV (132 aa).

It belongs to the peptidase M67A family. CSN6 subfamily. Component of the CSN complex, probably composed of CSN1, CSN2, CSN3, CSN4, CSN5, CSN6, CSN7 and CSN8.

Its function is as follows. Component of the COP9 signalosome complex (CSN), a complex involved in various cellular and developmental processes such as photomorphogenesis and response to hormones. The CSN complex is an essential regulator of the ubiquitin (Ubl) conjugation pathway by mediating the deneddylation of the cullin subunits of SCF-type E3 ligase complexes, leading to decrease the Ubl ligase activity of SCF. Involved in early response to iron deficiency. The sequence is that of COP9 signalosome complex subunit 6 from Oryza sativa subsp. japonica (Rice).